We begin with the raw amino-acid sequence, 719 residues long: SLSGLSKVSAFIHRADIGGVLNVSELNLIKRLIQVQNQFKTFYNQLVEEDEGVKYPILDDKMNQLPVLTDLFQQINETCDTYDLYDNASYELQGIRSKISSTNQRIRQNLDRIVKSQANQKKLSDAIVTVRNERNVIPVKAEYRQDFNGIVHDQSASGQTLYIEPSSVVEMNNQISRLRHDEAIEKERILTQLTGYVAADKDALLVAEQVMGQLDFLIAKARYSRSIKGTKPIFKEERTVYLPKAYHPLLNRETVVANTIEFMEDIETVIITGPNTGGKTVTLKTLGLIIVMAQSGLLIPTLDGSQLSVFKNVYCDIGDEQSIEQSLSTFSSHMTNIVEILKNADKHSLVLFDELGAGTDPSEGAALAMSILDHVRKIGSLVMATTHYPELKAYSYNREGVMNASVEFDVDTLSPTYKLLMGVPGRSNAFDISKKLGLSLNIINKAKTMIGTDEKEINEMIESLERNYKRVETQRLELDRLVKEAEQVHDDLSKQYQQFQNYEKSLIEDAKEKANQKIKAATKEADDIIKDLRQLREQKGADVKEHELIDKKKRLDDHYEAKSIKQNVQKQKYDKIVAGDEVKVLSYGQKGEVLEIVNDEEAIVQMGIIKMKLPIEDLEKKQKEKVKPTKMVTRQNRQTIKTELDLRGYRYEDALIELDQYLDQAVLSNYEQVYIIHGKGTGALQKGVQQHLKKHKSVSDFRGGMPSEGGFGVTVATLK.

273–280 (GPNTGGKT) serves as a coordination point for ATP. The Smr domain occupies 644–719 (LDLRGYRYED…GFGVTVATLK (76 aa)).

The protein belongs to the DNA mismatch repair MutS family. MutS2 subfamily. As to quaternary structure, homodimer. Binds to stalled ribosomes, contacting rRNA.

Its function is as follows. Endonuclease that is involved in the suppression of homologous recombination and thus may have a key role in the control of bacterial genetic diversity. Functionally, acts as a ribosome collision sensor, splitting the ribosome into its 2 subunits. Detects stalled/collided 70S ribosomes which it binds and splits by an ATP-hydrolysis driven conformational change. Acts upstream of the ribosome quality control system (RQC), a ribosome-associated complex that mediates the extraction of incompletely synthesized nascent chains from stalled ribosomes and their subsequent degradation. Probably generates substrates for RQC. The polypeptide is Endonuclease MutS2 (Staphylococcus aureus).